A 516-amino-acid chain; its full sequence is Keratin, type II cuticular Hb2 (516 aa).

Positions 1–118 (MSCRNFQLSP…PTVQRVKRDE (118 aa)) are head. The 312-residue stretch at 118 to 429 (EKEQIKCLNN…RLLEGEEHRL (312 aa)) folds into the IF rod domain. A coil 1A region spans residues 119-153 (KEQIKCLNNRFASFINKVRFLEQKNKLLETKWNFM). Residues 154–163 (QQQRSCQSNM) form a linker 1 region. The tract at residues 164–264 (EPLFEGYICA…FEEEIGLLQS (101 aa)) is coil 1B. Residues 265 to 281 (QISETSVIVKMDNSREL) are linker 12. Positions 282–425 (DVDGIVAEIK…ATYRRLLEGE (144 aa)) are coil 2. The tail stretch occupies residues 426–516 (EHRLCEGIGP…VGVGSNSCSR (91 aa)).

Belongs to the intermediate filament family. In terms of assembly, heterotetramer of two type I and two type II keratins.

This Mus musculus (Mouse) protein is Keratin, type II cuticular Hb2 (Krt82).